The chain runs to 208 residues: CASP-like protein 1D1 (208 aa).

The tract at residues 1–36 (MSSVDTEKPAPPPLETEAPPPPPPPPPPPPPPPPPP) is disordered. The Cytoplasmic portion of the chain corresponds to 1–41 (MSSVDTEKPAPPPLETEAPPPPPPPPPPPPPPPPPPAGYSA). The span at 9 to 36 (PAPPPLETEAPPPPPPPPPPPPPPPPPP) shows a compositional bias: pro residues. A helical membrane pass occupies residues 42 to 62 (LDVVLRILLLGSAVASVVVMV). Residues 63–89 (TSVQTKLIAVAGVPVLVSNKAKFQNSP) lie on the Extracellular side of the membrane. The chain crosses the membrane as a helical span at residues 90–110 (AFIYFVAALSVVGLYSIITTL). Residues 111-133 (ASFIFISKPSCSTKTILHLAIWD) lie on the Cytoplasmic side of the membrane. A helical transmembrane segment spans residues 134–154 (VLMLGLAASATGTAGGVAYVG). The Extracellular segment spans residues 155–180 (LKGNSHVGWNKVCNTYDKFCRHVGGS). The helical transmembrane segment at 181-201 (IAVALFASILLVLLVWLSLFT) threads the bilayer. Residues 202 to 208 (LYSRIRK) lie on the Cytoplasmic side of the membrane.

The protein belongs to the Casparian strip membrane proteins (CASP) family. Homodimer and heterodimers.

The protein resides in the cell membrane. The sequence is that of CASP-like protein 1D1 from Vitis vinifera (Grape).